The sequence spans 638 residues: 1-deoxy-D-xylulose-5-phosphate synthase (638 aa).

Thiamine diphosphate-binding positions include histidine 79 and 120–122; that span reads GHS. Residue aspartate 151 participates in Mg(2+) binding. Thiamine diphosphate contacts are provided by residues 152–153, asparagine 182, tyrosine 291, and glutamate 373; that span reads GA. A Mg(2+)-binding site is contributed by asparagine 182.

It belongs to the transketolase family. DXPS subfamily. As to quaternary structure, homodimer. Mg(2+) is required as a cofactor. It depends on thiamine diphosphate as a cofactor.

The catalysed reaction is D-glyceraldehyde 3-phosphate + pyruvate + H(+) = 1-deoxy-D-xylulose 5-phosphate + CO2. The protein operates within metabolic intermediate biosynthesis; 1-deoxy-D-xylulose 5-phosphate biosynthesis; 1-deoxy-D-xylulose 5-phosphate from D-glyceraldehyde 3-phosphate and pyruvate: step 1/1. In terms of biological role, catalyzes the acyloin condensation reaction between C atoms 2 and 3 of pyruvate and glyceraldehyde 3-phosphate to yield 1-deoxy-D-xylulose-5-phosphate (DXP). The sequence is that of 1-deoxy-D-xylulose-5-phosphate synthase from Xanthomonas campestris pv. campestris (strain 8004).